We begin with the raw amino-acid sequence, 933 residues long: Phosphoenolpyruvate carboxylase (933 aa).

Catalysis depends on residues histidine 164 and lysine 595.

The protein belongs to the PEPCase type 1 family. The cofactor is Mg(2+).

The catalysed reaction is oxaloacetate + phosphate = phosphoenolpyruvate + hydrogencarbonate. In terms of biological role, forms oxaloacetate, a four-carbon dicarboxylic acid source for the tricarboxylic acid cycle. In Rhodopseudomonas palustris (strain BisB5), this protein is Phosphoenolpyruvate carboxylase.